The following is a 5005-amino-acid chain: Bridge-like lipid transfer protein family member 1 (5005 aa).

A helical membrane pass occupies residues 27–47 (VVWLLVATILSCGWIIYLTYY). 2 disordered regions span residues 692–718 (RPAQ…PSEL) and 1205–1314 (KSVG…ASVC). The span at 708–718 (SPRPPVDPSEL) shows a compositional bias: pro residues. The span at 1205–1215 (KSVGIEGERKT) shows a compositional bias: basic and acidic residues. Residues 1226-1240 (SHSSSSSSEENSSSS) are compositionally biased toward low complexity. Positions 1248–1275 (GEKESPSSAADDHSVQKDLLHSARRDDG) are enriched in basic and acidic residues. Polar residues predominate over residues 1278–1303 (SVPTEISGTSPVSPNTQDKSVGQSPL). Phosphoserine occurs at positions 1301, 1305, and 1323. A Phosphothreonine modification is found at Thr1325. Disordered stretches follow at residues 1343–1376 (SDVS…SNSF), 1399–1425 (EEFE…QMQQ), 1521–1544 (TNKR…SEES), and 1676–1698 (FSEN…MIGT). A phosphoserine mark is found at Ser1355 and Ser1406. Basic residues predominate over residues 1521 to 1530 (TNKRTSKSSL). The span at 1684–1693 (QDIRGTKTEH) shows a compositional bias: basic and acidic residues. 2 positions are modified to phosphoserine: Ser1805 and Ser1808. Disordered stretches follow at residues 1927-1991 (RGGV…PLMP), 2165-2192 (PAQP…GGLQ), 2265-2288 (TSGD…KESP), 2367-2387 (ESPV…PNLP), 2400-2420 (SSDQ…QDDV), and 2598-2677 (TAGS…KDVV). Polar residues-rich tracts occupy residues 1931-1948 (LTSN…YNTD) and 1959-1971 (TSPS…NSVS). Polar residues-rich tracts occupy residues 2367–2379 (ESPV…NSLP), 2400–2418 (SSDQ…TSQD), and 2598–2608 (TAGSASPTPTF). 2 positions are modified to phosphoserine: Ser2601 and Ser2603. The span at 2619-2638 (SDFSRSSRGSLNGGNRVNNA) shows a compositional bias: low complexity. Residues 2643–2665 (ANNENNKKESRNKNSLGRSERRT) are compositionally biased toward basic and acidic residues. Ser2755 carries the phosphoserine modification. Residues 2928 to 2967 (RQPSTAPQPMKEDIATPLPSEKTPTSVNQTPIETNEFPQL) are disordered. Over residues 2949-2964 (KTPTSVNQTPIETNEF) the composition is skewed to polar residues. A phosphoserine mark is found at Ser3562, Glu3577, and Ser3653. 6 disordered regions span residues 3614–3662 (YSRS…TFNI), 3686–3744 (SSNS…ERFY), 3821–3843 (RRSY…KKFQ), 3935–3954 (KTNT…KGKG), 4089–4145 (TTYP…SSSS), and 4325–4396 (QSAS…ASQQ). The segment covering 3686–3711 (SSNSEGSCSVFSSPKTTGGFSPSVPF) has biased composition (polar residues). The span at 3727-3736 (EDSEKDEKDE) shows a compositional bias: acidic residues. The span at 3821–3837 (RRSYDRSSRSLDQDSPS) shows a compositional bias: basic and acidic residues. Residues 4097 to 4112 (SPGSNAPQTGAKTSAS) show a composition bias toward polar residues. A compositionally biased stretch (low complexity) spans 4117 to 4145 (PGSSGLGSPLGRSRHSSSQSDLTGSSSSS). Ser4124 is subject to Phosphoserine. Residues 4325 to 4358 (QSASFTHMPQSPNVFNEHMTNNTMSPGTAAQSLK) show a composition bias toward polar residues. The span at 4359–4372 (SPASIRSRSVSDSS) shows a compositional bias: low complexity. Residues 4381–4396 (KTSTPVNKSNKAASQQ) show a composition bias toward polar residues.

As to expression, highly expressed in testis and ovary. Weakly or not expressed in other tissues.

The protein localises to the cell membrane. It is found in the endoplasmic reticulum membrane. It localises to the mitochondrion membrane. Its function is as follows. Tube-forming lipid transport protein which provides phosphatidylethanolamine for glycosylphosphatidylinositol (GPI) anchor synthesis in the endoplasmic reticulum. Plays a role in endosomal trafficking and endosome recycling. Also involved in the actin cytoskeleton and cilia structural dynamics. Acts as a regulator of phagocytosis. The protein is Bridge-like lipid transfer protein family member 1 (Bltp1) of Mus musculus (Mouse).